The sequence spans 96 residues: UPF0235 protein YggU (96 aa).

This sequence belongs to the UPF0235 family.

The sequence is that of UPF0235 protein YggU from Escherichia coli (strain K12 / MC4100 / BW2952).